Reading from the N-terminus, the 267-residue chain is NAD kinase 2 (267 aa).

The Proton acceptor role is filled by D50. NAD(+) contacts are provided by residues 50-51, K55, 122-123, R149, D151, 162-167, and A186; these read DG, NE, and TAYNKS.

The protein belongs to the NAD kinase family. Requires a divalent metal cation as cofactor.

Its subcellular location is the cytoplasm. The catalysed reaction is NAD(+) + ATP = ADP + NADP(+) + H(+). Functionally, involved in the regulation of the intracellular balance of NAD and NADP, and is a key enzyme in the biosynthesis of NADP. Catalyzes specifically the phosphorylation on 2'-hydroxyl of the adenosine moiety of NAD to yield NADP. This is NAD kinase 2 from Listeria monocytogenes serovar 1/2a (strain ATCC BAA-679 / EGD-e).